Here is a 50-residue protein sequence, read N- to C-terminus: Parvalbumin (50 aa).

The EF-hand domain occupies 38 to 50 (KTHEQVKKVFNIL).

Belongs to the parvalbumin family.

Its function is as follows. Probably regulates the activity of the caudal neurosecretory system. Binds two calcium ions. This chain is Parvalbumin, found in Scyliorhinus canicula (Small-spotted catshark).